Consider the following 554-residue polypeptide: Solute carrier family 22 member 1 (554 aa).

Residues 1–21 (MPTVDDVLEQVGEFGWFQKRT) lie on the Cytoplasmic side of the membrane. Residues 22–42 (FLFLCLISAILAPIYLGIVFL) form a helical membrane-spanning segment. Over 43–149 (GFTPDHRCRS…LVCADAWKVD (107 aa)) the chain is Extracellular. Asparagine 71 is a glycosylation site (N-linked (GlcNAc...) asparagine). A helical transmembrane segment spans residues 150–170 (LFQSCVNLGFFLGSLGVGYIA). At 171-176 (DRFGRK) the chain is on the cytoplasmic side. Residues 177–197 (LCLLLTTLINAVSGVLTAVAP) traverse the membrane as a helical segment. The Extracellular segment spans residues 198–206 (DYTSMLLFR). Residues 207 to 229 (LLQGLVSKGSWMSGYTLITEFVG) form a helical membrane-spanning segment. Residues 230–237 (SGYRRTVA) lie on the Cytoplasmic side of the membrane. Residues 238 to 258 (ILYQVAFSVGLVALSGVAYAI) traverse the membrane as a helical segment. Topologically, residues 259–262 (PNWR) are extracellular. Residues 263 to 283 (WLQLTVSLPTFLCLFYYWCVP) traverse the membrane as a helical segment. Residues 283–287 (PESPR) carry the Proline-rich sequence motif. The Cytoplasmic portion of the chain corresponds to 284-347 (ESPRWLLSQK…FRTPNLRKHT (64 aa)). Residue serine 333 is modified to Phosphoserine. Residues 348 to 368 (FILMFLWFTCSVLYQGLILHM) form a helical membrane-spanning segment. At 369–374 (GATGGN) the chain is on the extracellular side. Residues 375 to 395 (VYLDFFYSSLVEFPAAFVILV) traverse the membrane as a helical segment. Over 396–402 (TIDRVGR) the chain is Cytoplasmic. A helical transmembrane segment spans residues 403–423 (IYPMAASNLAAGVASVILIFV). Residues 424–431 (PQDLHWLT) lie on the Extracellular side of the membrane. A helical membrane pass occupies residues 432–452 (IVLSCVGRMGATIVLQMICLV). The Cytoplasmic portion of the chain corresponds to 453 to 464 (NAELYPTFVRNL). The chain crosses the membrane as a helical span at residues 465 to 485 (GVMVCSALCDVGGIITPFMVF). Over 486 to 492 (RLMEVWQ) the chain is Extracellular. A helical membrane pass occupies residues 493–513 (PLPLIVFGVLGLLAGGMTLLL). Topologically, residues 514 to 554 (PETKGVALPETIEDAENLRRKAKPKESKIYLQVQTSELKGP) are cytoplasmic.

Belongs to the major facilitator (TC 2.A.1) superfamily. Organic cation transporter (TC 2.A.1.19) family. Phosphorylated. In terms of tissue distribution, expressed in kidney, liver and intestine.

It localises to the basolateral cell membrane. Its subcellular location is the apical cell membrane. The protein localises to the lateral cell membrane. It is found in the basal cell membrane. It carries out the reaction 1-methylnicotinamide(out) = 1-methylnicotinamide(in). The enzyme catalyses dopamine(out) = dopamine(in). The catalysed reaction is serotonin(out) = serotonin(in). It catalyses the reaction (R)-adrenaline(out) = (R)-adrenaline(in). It carries out the reaction (R)-noradrenaline(out) = (R)-noradrenaline(in). The enzyme catalyses histamine(out) = histamine(in). The catalysed reaction is guanidine(out) = guanidine(in). It catalyses the reaction choline(out) = choline(in). It carries out the reaction acetylcholine(in) = acetylcholine(out). The enzyme catalyses thiamine(in) = thiamine(out). The catalysed reaction is spermidine(in) = spermidine(out). It catalyses the reaction agmatine(out) = agmatine(in). It carries out the reaction putrescine(out) = putrescine(in). The enzyme catalyses (R)-carnitine(in) = (R)-carnitine(out). The catalysed reaction is O-isobutanoyl-(R)-carnitine(in) = O-isobutanoyl-(R)-carnitine(out). It catalyses the reaction O-acetyl-(R)-carnitine(in) = O-acetyl-(R)-carnitine(out). It carries out the reaction O-3-hydroxybutanoyl-(R)-carnitine(in) = O-3-hydroxybutanoyl-(R)-carnitine(out). The enzyme catalyses O-propanoyl-(R)-carnitine(in) = O-propanoyl-(R)-carnitine(out). The catalysed reaction is O-butanoyl-(R)-carnitine(in) = O-butanoyl-(R)-carnitine(out). It catalyses the reaction O-2-methylbutanoyl-(R)-carnitine(in) = O-2-methylbutanoyl-(R)-carnitine(out). It carries out the reaction O-3-methylbutanoyl-(R)-carnitine(in) = O-3-methylbutanoyl-(R)-carnitine(out). The enzyme catalyses O-hexanoyl-(R)-carnitine(in) = O-hexanoyl-(R)-carnitine(out). The catalysed reaction is L-histidyl-L-proline diketopiperazine(in) = L-histidyl-L-proline diketopiperazine(out). It catalyses the reaction (R)-salsolinol(in) = (R)-salsolinol(out). It carries out the reaction prostaglandin F2alpha(out) = prostaglandin F2alpha(in). The enzyme catalyses prostaglandin E2(out) = prostaglandin E2(in). Its activity is regulated as follows. Phosphorylation of the transporter leads to changes in its substrate affinity, resulting in a regulation of the transport activity. In contrast with rat ortholog, ASP uptake is inhibited by protein kinase A (PKA) and C (PKC) activation. ASP uptake is also endogenously activated by calmodulin, the calmodulin-dependent kinase II and LCK tyrosine kinase. Inhibited by cGMP, most likely through a cGMP-binding protein that interacts with OCT1. In terms of biological role, electrogenic voltage-dependent transporter that mediates the transport of a variety of organic cations such as endogenous bioactive amines, cationic drugs and xenobiotics. Functions as a pH- and Na(+)-independent, bidirectional transporter. Cation cellular uptake or release is driven by the electrochemical potential (i.e. membrane potential and concentration gradient) and substrate selectivity. Hydrophobicity is a major requirement for recognition in polyvalent substrates and inhibitors. Primarily expressed in the basolateral membrane of hepatocytes and proximal tubules and involved in the uptake and disposition of cationic compounds from the blood by hepatic and renal clearance. Most likely functions as an uptake carrier in enterocytes contributing to the intestinal elimination of organic cations from the systemic circulation. Transports endogenous monoamines such as N-1-methylnicotinamide (NMN), guanidine, neurotransmitters dopamine, serotonin, noradrenaline, adrenaline and histamine, and quaternary ammonium compound such as choline. Also transports natural polyamines such as spermidine, agmatine and putrescine at low affinity, but relatively high turnover. Involved in the hepatic and intestinal uptake of the vitamin B1/thiamine, hence regulating hepatic lipid and energy metabolism. Contributes to the influx and efflux of fatty acid carriers carnitines and acylcarnitines across the basolateral membrane of hepatocytes, from the liver to the systemic circulation and inversely and may be involved in regulating the systemic availability of hepatic acylcarnitines. Also capable of transporting non-amine endogenous compounds such as prostaglandin E2 (PGE2) and prostaglandin F2-alpha (PGF2-alpha). May contribute to the transport of cationic compounds in testes across the blood-testis-barrier. Also mediates the uptake of xenobiotics tributylmethylammonium (TBuMA), quinidine, N-methyl-quinine (NMQ), N-methyl-quinidine (NMQD) N-(4,4-azo-n-pentyl)-quinuclidine (APQ), azidoprocainamide methoiodide (AMP), N-(4,4-azo-n-pentyl)-21-deoxyajmalinium (APDA) and 4-(4-(dimethylamino)styryl)-N-methylpyridinium (ASP). The polypeptide is Solute carrier family 22 member 1 (SLC22A1) (Oryctolagus cuniculus (Rabbit)).